We begin with the raw amino-acid sequence, 155 residues long: Protein SprT-like (155 aa).

Positions 7 to 145 constitute a SprT-like domain; it reads QRHMEEVSLQ…GSCGGKLIQT (139 aa). His-67 lines the Zn(2+) pocket. The active site involves Glu-68. A Zn(2+)-binding site is contributed by His-71.

Belongs to the SprT family. The cofactor is Zn(2+).

The protein localises to the cytoplasm. This Listeria monocytogenes serovar 1/2a (strain ATCC BAA-679 / EGD-e) protein is Protein SprT-like.